The sequence spans 87 residues: MATKKAGGSSRNGRDSAGRRLGVKKADGQYVIPGNIIVRQRGTKIHPGTNVGLGKDHTIFALIEGRVEFLTKRNHKIVNVKEIASTY.

A disordered region spans residues 1–24; the sequence is MATKKAGGSSRNGRDSAGRRLGVK.

The protein belongs to the bacterial ribosomal protein bL27 family.

The chain is Large ribosomal subunit protein bL27 from Rickettsia massiliae (strain Mtu5).